Consider the following 77-residue polypeptide: MKLTCVLIIAVLFLTASQLITADYSRDKQEYGAERLRDAMGKFKGSRSCGHSGAGCYTRPCCPGLHCSGGHAGGLCV.

The N-terminal stretch at 1–22 (MKLTCVLIIAVLFLTASQLITA) is a signal peptide. A propeptide spanning residues 23 to 47 (DYSRDKQEYGAERLRDAMGKFKGSR) is cleaved from the precursor. 3 disulfides stabilise this stretch: cysteine 49–cysteine 62, cysteine 56–cysteine 67, and cysteine 61–cysteine 76.

The protein belongs to the conotoxin O1 superfamily. In terms of tissue distribution, expressed by the venom duct.

The protein resides in the secreted. The polypeptide is Conotoxin LiC42 (Conus lividus (Livid cone)).